The primary structure comprises 404 residues: Putative aspartate aminotransferase, cytoplasmic 2 (404 aa).

N6-(pyridoxal phosphate)lysine is present on Lys249.

This sequence belongs to the class-I pyridoxal-phosphate-dependent aminotransferase family. Homodimer. The cofactor is pyridoxal 5'-phosphate.

It is found in the cytoplasm. The enzyme catalyses L-aspartate + 2-oxoglutarate = oxaloacetate + L-glutamate. The polypeptide is Putative aspartate aminotransferase, cytoplasmic 2 (Got1l1) (Mus musculus (Mouse)).